Here is a 641-residue protein sequence, read N- to C-terminus: Choline O-acetyltransferase (641 aa).

Ser17 is subject to Phosphoserine. His335 functions as the Proton acceptor in the catalytic mechanism. The residue at position 366 (Ser366) is a Phosphoserine. CoA contacts are provided by residues 413–425, Ser451, and Gln552; that span reads GKTF…CSPD. A disordered region spans residues 615-641; the sequence is CSSRQPADSKPPTAKERARGPSQAKQS.

Belongs to the carnitine/choline acetyltransferase family.

The catalysed reaction is choline + acetyl-CoA = acetylcholine + CoA. Its function is as follows. Catalyzes the reversible synthesis of acetylcholine (ACh) from acetyl CoA and choline at cholinergic synapses. The polypeptide is Choline O-acetyltransferase (Chat) (Mus musculus (Mouse)).